We begin with the raw amino-acid sequence, 119 residues long: uncharacterized protein (119 aa).

Residues 63–104 (KKIKKELESNSEKRKAALQMIKEEHTAKVDRYKMIIEDLRQQ) are a coiled coil.

This is an uncharacterized protein from Bacillus subtilis (strain 168).